We begin with the raw amino-acid sequence, 638 residues long: Gamma-aminobutyric acid receptor subunit theta (638 aa).

A signal peptide spans 1–21 (MGIRGMLRAAALLLLIRTWLA). Over 22-267 (ESNGPSPTPK…FQVQREVRSY (246 aa)) the chain is Extracellular. Asparagine 127 is a glycosylation site (N-linked (GlcNAc...) asparagine). An intrachain disulfide couples cysteine 183 to cysteine 197. The chain crosses the membrane as a helical span at residues 268 to 288 (LVQVYWPTVLTTILSWISFWM). The Cytoplasmic segment spans residues 289 to 296 (NYDSSAAR). Residues 297-314 (VTIGLTSILVLTTIDSHM) form a helical membrane-spanning segment. At 315 to 325 (RDKLPHISCIK) the chain is on the extracellular side. A helical membrane pass occupies residues 326–346 (AIDIYILVCLFFVFLSLLEYV). The Cytoplasmic portion of the chain corresponds to 347–617 (YINYLFFSQV…NRVPKVDRWS (271 aa)). The segment at 491–515 (ACDDEDSEESLSSEESHGHGSSHTG) is disordered. Over residues 492–502 (CDDEDSEESLS) the composition is skewed to acidic residues. The chain crosses the membrane as a helical span at residues 618 to 638 (RFLFPLSFGLFNVVYWLYHVY).

The protein belongs to the ligand-gated ion channel (TC 1.A.9) family. Gamma-aminobutyric acid receptor (TC 1.A.9.5) subfamily. GABRQ sub-subfamily. As to quaternary structure, heteropentamer, formed by a combination of alpha (GABRA1-6), beta (GABRB1-3), gamma (GABRG1-3), delta (GABRD), epsilon (GABRE), rho (GABRR1-3), pi (GABRP) and theta (GABRQ) chains, each subunit exhibiting distinct physiological and pharmacological properties. Expressed in brain, lung, and spleen.

It localises to the postsynaptic cell membrane. Its subcellular location is the cell membrane. It carries out the reaction chloride(in) = chloride(out). Potentiated by etomidate, propofol, pregnanolone and pentobarbital. Theta subunit of the heteropentameric ligand-gated chloride channel gated by gamma-aminobutyric acid (GABA), a major inhibitory neurotransmitter in the brain. GABA-gated chloride channels, also named GABA(A) receptors (GABAAR), consist of five subunits arranged around a central pore and contain GABA active binding site(s) located at the alpha and beta subunit interfaces. When activated by GABA, GABAARs selectively allow the flow of chloride anions across the cell membrane down their electrochemical gradient. The protein is Gamma-aminobutyric acid receptor subunit theta of Mus musculus (Mouse).